Reading from the N-terminus, the 154-residue chain is UPF0178 protein YaiI (154 aa).

The protein belongs to the UPF0178 family.

This is UPF0178 protein YaiI from Escherichia fergusonii (strain ATCC 35469 / DSM 13698 / CCUG 18766 / IAM 14443 / JCM 21226 / LMG 7866 / NBRC 102419 / NCTC 12128 / CDC 0568-73).